A 236-amino-acid chain; its full sequence is Biosynthetic peptidoglycan transglycosylase (236 aa).

Residues 12 to 31 (ALLWFAASSIVLVLVFRWVP) traverse the membrane as a helical segment.

It belongs to the glycosyltransferase 51 family.

The protein localises to the cell inner membrane. The enzyme catalyses [GlcNAc-(1-&gt;4)-Mur2Ac(oyl-L-Ala-gamma-D-Glu-L-Lys-D-Ala-D-Ala)](n)-di-trans,octa-cis-undecaprenyl diphosphate + beta-D-GlcNAc-(1-&gt;4)-Mur2Ac(oyl-L-Ala-gamma-D-Glu-L-Lys-D-Ala-D-Ala)-di-trans,octa-cis-undecaprenyl diphosphate = [GlcNAc-(1-&gt;4)-Mur2Ac(oyl-L-Ala-gamma-D-Glu-L-Lys-D-Ala-D-Ala)](n+1)-di-trans,octa-cis-undecaprenyl diphosphate + di-trans,octa-cis-undecaprenyl diphosphate + H(+). It functions in the pathway cell wall biogenesis; peptidoglycan biosynthesis. Functionally, peptidoglycan polymerase that catalyzes glycan chain elongation from lipid-linked precursors. This Pseudomonas putida (strain GB-1) protein is Biosynthetic peptidoglycan transglycosylase.